We begin with the raw amino-acid sequence, 107 residues long: uncharacterized protein (107 aa).

An N-terminal signal peptide occupies residues 1 to 34; sequence MRLQWPKFITFLSTGSCCLLFLLLPCSFFPLPTA.

This is an uncharacterized protein from Saccharomyces cerevisiae (strain ATCC 204508 / S288c) (Baker's yeast).